A 419-amino-acid polypeptide reads, in one-letter code: UDP-N-acetylglucosamine 1-carboxyvinyltransferase (419 aa).

22–23 is a phosphoenolpyruvate binding site; that stretch reads KN. R91 contributes to the UDP-N-acetyl-alpha-D-glucosamine binding site. Residue C115 is the Proton donor of the active site. At C115 the chain carries 2-(S-cysteinyl)pyruvic acid O-phosphothioketal. UDP-N-acetyl-alpha-D-glucosamine is bound by residues 120–124, 160–163, D305, and I327; these read RPVDL and KVSV.

The protein belongs to the EPSP synthase family. MurA subfamily.

The protein localises to the cytoplasm. It carries out the reaction phosphoenolpyruvate + UDP-N-acetyl-alpha-D-glucosamine = UDP-N-acetyl-3-O-(1-carboxyvinyl)-alpha-D-glucosamine + phosphate. The protein operates within cell wall biogenesis; peptidoglycan biosynthesis. Its activity is regulated as follows. In vitro inhibited by covalent binding of fosfomycin and the fungal product terreic acid in the presence of substrate UDP-N-acetylglucosamine, with an inactivation rate constant of 130 M(-1)sec(-1) for terreic acid. Its function is as follows. Cell wall formation. Adds enolpyruvyl to UDP-N-acetylglucosamine. Target for the antibiotic fosfomycin. In Enterobacter cloacae subsp. cloacae (strain ATCC 13047 / DSM 30054 / NBRC 13535 / NCTC 10005 / WDCM 00083 / NCDC 279-56), this protein is UDP-N-acetylglucosamine 1-carboxyvinyltransferase.